The following is a 606-amino-acid chain: Peptide-N(4)-(N-acetyl-beta-glucosaminyl)asparagine amidase (606 aa).

In terms of domain architecture, Thioredoxin spans 2–108 (PVTEVGSLPE…IAEKIRQHYS (107 aa)). Zn(2+) contacts are provided by C191, C194, C225, and C228. The Nucleophile role is filled by C251. Residues H278 and D295 contribute to the active site. One can recognise a PAW domain in the interval 404–606 (DLGGRITGSE…SFSVKIWMKN (203 aa)).

It belongs to the transglutaminase-like superfamily. PNGase family. Zn(2+) serves as cofactor.

The protein resides in the cytoplasm. Its subcellular location is the endoplasmic reticulum. It carries out the reaction Hydrolysis of an N(4)-(acetyl-beta-D-glucosaminyl)asparagine residue in which the glucosamine residue may be further glycosylated, to yield a (substituted) N-acetyl-beta-D-glucosaminylamine and a peptide containing an aspartate residue.. Inhibited by Zn(2+) and z-VAD-fmk (caspase inhibitor) but unaffected by EDTA. In terms of biological role, specifically deglycosylates the denatured form of N-linked glycoproteins in the cytoplasm and assists their proteasome-mediated degradation. Cleaves the beta-aspartyl-glucosamine (GlcNAc) of the glycan and the amide side chain of Asn, converting Asn to Asp. Prefers proteins containing high-mannose over those bearing complex type oligosaccharides. Can recognize misfolded proteins in the endoplasmic reticulum that are exported to the cytosol to be destroyed and deglycosylate them, while it has no activity toward native proteins. Deglycosylation is a prerequisite for subsequent proteasome-mediated degradation of some, but not all, misfolded glycoproteins. Also displays oxidoreductase (thioredoxin) activity. Involved in regulating the expression of proteasomal subunits such as rpt-3 in order to confer resistance to proteasomal dysfunction. The sequence is that of Peptide-N(4)-(N-acetyl-beta-glucosaminyl)asparagine amidase (png-1) from Caenorhabditis elegans.